The chain runs to 364 residues: Nuclear hormone receptor family member nhr-53 (364 aa).

Residues Pro-20–Gln-95 constitute a DNA-binding region (nuclear receptor). NR C4-type zinc fingers lie at residues Cys-23–Cys-43 and Cys-59–Cys-83. An NR LBD domain is found at Arg-110–Thr-363.

Belongs to the nuclear hormone receptor family.

The protein localises to the nucleus. Its function is as follows. Orphan nuclear receptor. The polypeptide is Nuclear hormone receptor family member nhr-53 (nhr-53) (Caenorhabditis elegans).